A 233-amino-acid chain; its full sequence is 5'-methylthioadenosine/S-adenosylhomocysteine nucleosidase (233 aa).

Glutamate 12 (proton acceptor) is an active-site residue. Substrate is bound by residues glycine 78, isoleucine 153, and 174-175; that span reads ME. Aspartate 198 (proton donor) is an active-site residue.

It belongs to the PNP/UDP phosphorylase family. MtnN subfamily.

The enzyme catalyses S-adenosyl-L-homocysteine + H2O = S-(5-deoxy-D-ribos-5-yl)-L-homocysteine + adenine. The catalysed reaction is S-methyl-5'-thioadenosine + H2O = 5-(methylsulfanyl)-D-ribose + adenine. It carries out the reaction 5'-deoxyadenosine + H2O = 5-deoxy-D-ribose + adenine. It participates in amino-acid biosynthesis; L-methionine biosynthesis via salvage pathway; S-methyl-5-thio-alpha-D-ribose 1-phosphate from S-methyl-5'-thioadenosine (hydrolase route): step 1/2. Its function is as follows. Catalyzes the irreversible cleavage of the glycosidic bond in both 5'-methylthioadenosine (MTA) and S-adenosylhomocysteine (SAH/AdoHcy) to adenine and the corresponding thioribose, 5'-methylthioribose and S-ribosylhomocysteine, respectively. Also cleaves 5'-deoxyadenosine, a toxic by-product of radical S-adenosylmethionine (SAM) enzymes, into 5-deoxyribose and adenine. The chain is 5'-methylthioadenosine/S-adenosylhomocysteine nucleosidase from Exiguobacterium sp. (strain ATCC BAA-1283 / AT1b).